We begin with the raw amino-acid sequence, 257 residues long: Pyridoxine 5'-phosphate synthase (257 aa).

Asn6 is a binding site for 3-amino-2-oxopropyl phosphate. Residue 8–9 (DH) coordinates 1-deoxy-D-xylulose 5-phosphate. Arg17 is a binding site for 3-amino-2-oxopropyl phosphate. His41 (proton acceptor) is an active-site residue. Residues Arg43 and His48 each contribute to the 1-deoxy-D-xylulose 5-phosphate site. Glu68 functions as the Proton acceptor in the catalytic mechanism. Residue Thr98 coordinates 1-deoxy-D-xylulose 5-phosphate. His210 acts as the Proton donor in catalysis. 3-amino-2-oxopropyl phosphate contacts are provided by residues Gly211 and 232–233 (GQ).

The protein belongs to the PNP synthase family. In terms of assembly, homooctamer; tetramer of dimers.

The protein localises to the cytoplasm. The catalysed reaction is 3-amino-2-oxopropyl phosphate + 1-deoxy-D-xylulose 5-phosphate = pyridoxine 5'-phosphate + phosphate + 2 H2O + H(+). It participates in cofactor biosynthesis; pyridoxine 5'-phosphate biosynthesis; pyridoxine 5'-phosphate from D-erythrose 4-phosphate: step 5/5. Functionally, catalyzes the complicated ring closure reaction between the two acyclic compounds 1-deoxy-D-xylulose-5-phosphate (DXP) and 3-amino-2-oxopropyl phosphate (1-amino-acetone-3-phosphate or AAP) to form pyridoxine 5'-phosphate (PNP) and inorganic phosphate. The protein is Pyridoxine 5'-phosphate synthase of Campylobacter jejuni subsp. doylei (strain ATCC BAA-1458 / RM4099 / 269.97).